Reading from the N-terminus, the 449-residue chain is tRNA (guanine(37)-N(1))-methyltransferase (449 aa).

Residues His216, 254–255 (DL), 282–283 (DG), and Asn345 contribute to the S-adenosyl-L-methionine site.

Belongs to the class I-like SAM-binding methyltransferase superfamily. TRM5/TYW2 family. Monomer.

The protein localises to the mitochondrion matrix. It is found in the nucleus. Its subcellular location is the cytoplasm. It catalyses the reaction guanosine(37) in tRNA + S-adenosyl-L-methionine = N(1)-methylguanosine(37) in tRNA + S-adenosyl-L-homocysteine + H(+). Its function is as follows. Specifically methylates the N1 position of guanosine-37 in various cytoplasmic and mitochondrial tRNAs. Methylation is not dependent on the nature of the nucleoside 5' of the target nucleoside. This is the first step in the biosynthesis of wybutosine (yW), a modified base adjacent to the anticodon of tRNAs and required for accurate decoding. The sequence is that of tRNA (guanine(37)-N(1))-methyltransferase from Candida albicans (strain SC5314 / ATCC MYA-2876) (Yeast).